A 409-amino-acid polypeptide reads, in one-letter code: Glycogenin (409 aa).

UDP contacts are provided by Leu8, Tyr14, and Arg80. UDP-alpha-D-glucose contacts are provided by Leu8, Tyr14, Arg80, Lys89, Asp105, Asp107, Asn140, Ser141, Asp169, Asp172, and Gln173. UDP is bound by residues Asp105 and Asp107. Residues Asp105 and Asp107 each contribute to the Mn(2+) site. O-linked (Glc...) tyrosine glycosylation is present at Tyr212. His229, Gly232, and Lys235 together coordinate UDP. His229 serves as a coordination point for Mn(2+). UDP-alpha-D-glucose is bound by residues Gly232 and Lys235. Positions 283–303 (RIEEDSHETEEKVDEEVSISE) are disordered.

The protein belongs to the glycosyltransferase 8 family. Glycogenin subfamily. The cofactor is Mn(2+).

The protein localises to the cytoplasm. The protein resides in the vacuole. The catalysed reaction is L-tyrosyl-[glycogenin] + UDP-alpha-D-glucose = alpha-D-glucosyl-L-tyrosyl-[glycogenin] + UDP + H(+). It carries out the reaction [1,4-alpha-D-glucosyl](n)-L-tyrosyl-[glycogenin] + UDP-alpha-D-glucose = [1,4-alpha-D-glucosyl](n+1)-L-tyrosyl-[glycogenin] + UDP + H(+). Functionally, glycogenin participates in the glycogen biosynthetic process along with glycogen synthase and glycogen branching enzyme. It catalyzes the formation of a short alpha (1,4)-glucosyl chain covalently attached via a glucose 1-O-tyrosyl linkage to internal tyrosine residues and these chains act as primers for the elongation reaction catalyzed by glycogen synthase. The chain is Glycogenin from Komagataella phaffii (strain GS115 / ATCC 20864) (Yeast).